Here is a 401-residue protein sequence, read N- to C-terminus: Probable tRNA sulfurtransferase (401 aa).

The 106-residue stretch at 60-165 (EPISEQLKGV…EQATYITFKD (106 aa)) folds into the THUMP domain. ATP-binding positions include 183-184 (ML), 208-209 (HF), arginine 265, glycine 287, and glutamine 296.

Belongs to the ThiI family.

It is found in the cytoplasm. The catalysed reaction is [ThiI sulfur-carrier protein]-S-sulfanyl-L-cysteine + a uridine in tRNA + 2 reduced [2Fe-2S]-[ferredoxin] + ATP + H(+) = [ThiI sulfur-carrier protein]-L-cysteine + a 4-thiouridine in tRNA + 2 oxidized [2Fe-2S]-[ferredoxin] + AMP + diphosphate. It catalyses the reaction [ThiS sulfur-carrier protein]-C-terminal Gly-Gly-AMP + S-sulfanyl-L-cysteinyl-[cysteine desulfurase] + AH2 = [ThiS sulfur-carrier protein]-C-terminal-Gly-aminoethanethioate + L-cysteinyl-[cysteine desulfurase] + A + AMP + 2 H(+). The protein operates within cofactor biosynthesis; thiamine diphosphate biosynthesis. In terms of biological role, catalyzes the ATP-dependent transfer of a sulfur to tRNA to produce 4-thiouridine in position 8 of tRNAs, which functions as a near-UV photosensor. Also catalyzes the transfer of sulfur to the sulfur carrier protein ThiS, forming ThiS-thiocarboxylate. This is a step in the synthesis of thiazole, in the thiamine biosynthesis pathway. The sulfur is donated as persulfide by IscS. The chain is Probable tRNA sulfurtransferase from Bacillus pumilus (strain SAFR-032).